The sequence spans 476 residues: Eukaryotic translation initiation factor 3 subunit L (476 aa).

Residues 257-452 (DAIRMFSHIL…DLDYALENDL (196 aa)) enclose the PCI domain.

The protein belongs to the eIF-3 subunit L family. In terms of assembly, component of the eukaryotic translation initiation factor 3 (eIF-3) complex.

The protein resides in the cytoplasm. Its function is as follows. Component of the eukaryotic translation initiation factor 3 (eIF-3) complex, which is involved in protein synthesis of a specialized repertoire of mRNAs and, together with other initiation factors, stimulates binding of mRNA and methionyl-tRNAi to the 40S ribosome. The eIF-3 complex specifically targets and initiates translation of a subset of mRNAs involved in cell proliferation. This Aspergillus oryzae (strain ATCC 42149 / RIB 40) (Yellow koji mold) protein is Eukaryotic translation initiation factor 3 subunit L.